A 574-amino-acid polypeptide reads, in one-letter code: GRB2-associated-binding protein 4 (574 aa).

A disordered region spans residues 1–33; that stretch reads MSLPSPSPSRELCPPDPAFAPLSSWPGSGPAGG. In terms of domain architecture, PH spans 39 to 152; sequence HVLYSGWLRK…WVQSICQICG (114 aa). 4 disordered regions span residues 176 to 200, 215 to 234, 293 to 331, and 418 to 513; these read PAEP…PVSH, LRSH…ASFS, SLAS…RPAE, and PPVN…PRST. Positions 181-193 are enriched in polar residues; sequence CSHQHLPQEQEPT. Composition is skewed to polar residues over residues 302-318 and 424-442; these read GSLT…SGKY and LKPN…NNRV. A compositionally biased stretch (low complexity) spans 457–478; that stretch reads SGTSHTFDSSSSQHPISTQSIT. Polar residues predominate over residues 502-513; that stretch reads GGTSSSAPPRST.

The protein belongs to the GAB family.

This Homo sapiens (Human) protein is GRB2-associated-binding protein 4 (GAB4).